Consider the following 323-residue polypeptide: GDSL esterase/lipase At5g03980 (323 aa).

The first 21 residues, 1–21, serve as a signal peptide directing secretion; sequence MSTTKALSLLVFILFVSLVHS. Ser-36 acts as the Nucleophile in catalysis. A glycan (N-linked (GlcNAc...) asparagine) is linked at Asn-77. Catalysis depends on residues Asp-294 and His-297.

The protein belongs to the 'GDSL' lipolytic enzyme family.

The protein localises to the secreted. The chain is GDSL esterase/lipase At5g03980 from Arabidopsis thaliana (Mouse-ear cress).